The chain runs to 986 residues: Translation initiation factor IF-2 (986 aa).

Residues 95–394 (TFVRRDETSA…GRGKHQDQNT (300 aa)) form a disordered region. Residues 122–182 (ELQRREEEAR…EEEAAKKRAA (61 aa)) are compositionally biased toward basic and acidic residues. Low complexity predominate over residues 183–222 (AEAAAREQAQAAKPAQAAQPAAAKAEPVAAKAAEPAVAKQ). A compositionally biased stretch (basic and acidic residues) spans 228 to 277 (ERAAAERAAQREAAKKAEDAARQAAEKARAEQEQIAKRRAAAEAEARAIR). A compositionally biased stretch (low complexity) spans 320 to 342 (APSRPAAKKPAAAAPAATTTPSA). Residues 371-384 (TSGGVDRGWRGGPK) are compositionally biased toward gly residues. The 170-residue stretch at 486–655 (PRPPVVTVMG…LLQAEVLELK (170 aa)) folds into the tr-type G domain. The tract at residues 495–502 (GHVDHGKT) is G1. 495 to 502 (GHVDHGKT) lines the GTP pocket. Residues 520-524 (GITQH) form a G2 region. Residues 541-544 (DTPG) form a G3 region. GTP contacts are provided by residues 541–545 (DTPGH) and 595–598 (NKID). The interval 595-598 (NKID) is G4. Residues 631–633 (SAK) are G5.

It belongs to the TRAFAC class translation factor GTPase superfamily. Classic translation factor GTPase family. IF-2 subfamily.

The protein resides in the cytoplasm. One of the essential components for the initiation of protein synthesis. Protects formylmethionyl-tRNA from spontaneous hydrolysis and promotes its binding to the 30S ribosomal subunits. Also involved in the hydrolysis of GTP during the formation of the 70S ribosomal complex. The polypeptide is Translation initiation factor IF-2 (Paraburkholderia phytofirmans (strain DSM 17436 / LMG 22146 / PsJN) (Burkholderia phytofirmans)).